The sequence spans 275 residues: Formamidopyrimidine-DNA glycosylase (275 aa).

Catalysis depends on Pro2, which acts as the Schiff-base intermediate with DNA. The active-site Proton donor is Glu3. The active-site Proton donor; for beta-elimination activity is Lys58. DNA contacts are provided by His91 and Arg110. The segment at 238 to 272 adopts an FPG-type zinc-finger fold; that stretch reads QVYGQTGKPCPRCGQAIVKLKVGGRGTHICPKCQK. The active-site Proton donor; for delta-elimination activity is Arg262.

This sequence belongs to the FPG family. As to quaternary structure, monomer. Zn(2+) serves as cofactor.

The catalysed reaction is Hydrolysis of DNA containing ring-opened 7-methylguanine residues, releasing 2,6-diamino-4-hydroxy-5-(N-methyl)formamidopyrimidine.. The enzyme catalyses 2'-deoxyribonucleotide-(2'-deoxyribose 5'-phosphate)-2'-deoxyribonucleotide-DNA = a 3'-end 2'-deoxyribonucleotide-(2,3-dehydro-2,3-deoxyribose 5'-phosphate)-DNA + a 5'-end 5'-phospho-2'-deoxyribonucleoside-DNA + H(+). Its function is as follows. Involved in base excision repair of DNA damaged by oxidation or by mutagenic agents. Acts as a DNA glycosylase that recognizes and removes damaged bases. Has a preference for oxidized purines, such as 7,8-dihydro-8-oxoguanine (8-oxoG). Has AP (apurinic/apyrimidinic) lyase activity and introduces nicks in the DNA strand. Cleaves the DNA backbone by beta-delta elimination to generate a single-strand break at the site of the removed base with both 3'- and 5'-phosphates. In Streptococcus pyogenes serotype M6 (strain ATCC BAA-946 / MGAS10394), this protein is Formamidopyrimidine-DNA glycosylase.